Here is a 430-residue protein sequence, read N- to C-terminus: Dolichyl-diphosphooligosaccharide--protein glycosyltransferase subunit WBP1 (430 aa).

Residues 1-20 form the signal peptide; the sequence is MRTDWNFFFCILLQAIFVVG. At 24–393 the chain is on the lumenal side; it reads SRTLVLYDQS…PRSWEISNSW (370 aa). Asn60 and Asn332 each carry an N-linked (GlcNAc...) asparagine glycan. Residues 394–414 form a helical membrane-spanning segment; the sequence is VYISAICGVIVAWIFFVVSFV. The Cytoplasmic segment spans residues 415 to 430; that stretch reads TTSSVGKKLETFKKTN.

It belongs to the DDOST 48 kDa subunit family. Component of the oligosaccharyltransferase (OST) complex, which appears to exist in two assemblies comprising OST1, OST2, OST4, OST5, STT3, SWP1, WPB1, and either OST3 or OST6. OST assembly occurs through the formation of 3 subcomplexes. Subcomplex 1 contains OST1 and OST5, subcomplex 2 contains STT3, OST3, and OST4, and subcomplex 3 contains OST2, WBP1, and SWP1. Interacts with SEC61, SBH1 and SSS1.

The protein localises to the endoplasmic reticulum membrane. It functions in the pathway protein modification; protein glycosylation. Functionally, subunit of the oligosaccharyl transferase (OST) complex that catalyzes the initial transfer of a defined glycan (Glc(3)Man(9)GlcNAc(2) in eukaryotes) from the lipid carrier dolichol-pyrophosphate to an asparagine residue within an Asn-X-Ser/Thr consensus motif in nascent polypeptide chains, the first step in protein N-glycosylation. N-glycosylation occurs cotranslationally and the complex associates with the Sec61 complex at the channel-forming translocon complex that mediates protein translocation across the endoplasmic reticulum (ER). All subunits are required for a maximal enzyme activity. The sequence is that of Dolichyl-diphosphooligosaccharide--protein glycosyltransferase subunit WBP1 (WBP1) from Saccharomyces cerevisiae (strain ATCC 204508 / S288c) (Baker's yeast).